The sequence spans 313 residues: MVRDIDKTTSLHLNNEAQFLCFRLDAEKDAQLYGMNIFKIREIIHYDGEVTEILGGSDGVMLGFLSVRGESIPLVDVKRWLHYNANDPSRDLKECSVKDDHNLVIVCHFSNHSIALKVLKIERIIHKNWTEISAGDKQGINEEGKLSAITRFDEERVVQILDVEKMISDVFPSLKDLDDLTLRCIEAIQSQKLILIAEDSLSALKTLEKIVQTLELRYLAFPNGRELLDYLYEKEHYQQVGVVITDLEMPNISGFEVLKTIKADHRTEHLPVIINSSMSSDSNRQLAQSLEADGFVVKSNILEIHEMLKKTLS.

The CheW-like domain maps to Glu-16–Pro-172. Residues Leu-193–Ser-313 form the Response regulatory domain. Asp-246 carries the post-translational modification 4-aspartylphosphate.

Post-translationally, phosphorylated; probably by transfer of CheAY phosphate group.

Functionally, plays a role in chemotaxis signal transduction system in order to colonize the host stomach. May act as a phosphate sink to control the flow of phosphate to CheAY. The protein is Chemotaxis protein CheV2 of Helicobacter pylori (strain ATCC 700392 / 26695) (Campylobacter pylori).